We begin with the raw amino-acid sequence, 201 residues long: UPF0056 membrane protein PH0760 (201 aa).

The next 6 helical transmembrane spans lie at 8–28 (FMILYTGMFAITNPIGAVPVF), 49–69 (ITVFITLTVFALVGQWIFKFF), 73–93 (IDAFAIAGGILLFRMGMEMLS), 111–131 (VAVIPLAIPLISGPGAITTVM), 140–160 (GIVILTIIAIGLTTYGILYSG), and 181–201 (LILTSMAMQMIINGIKGAFGI).

This sequence belongs to the UPF0056 (MarC) family.

It localises to the cell membrane. This Pyrococcus horikoshii (strain ATCC 700860 / DSM 12428 / JCM 9974 / NBRC 100139 / OT-3) protein is UPF0056 membrane protein PH0760.